The sequence spans 122 residues: Fluoride-specific ion channel FluC (122 aa).

The next 4 helical transmembrane spans lie at 1–21 (MIGT…SRML), 34–54 (FPYG…LFFS), 60–80 (GVHI…FTTF), and 100–120 (FLNI…GFLI).

This sequence belongs to the fluoride channel Fluc/FEX (TC 1.A.43) family.

The protein resides in the cell inner membrane. The enzyme catalyses fluoride(in) = fluoride(out). Fluoride-specific ion channel. Important for reducing fluoride concentration in the cell, thus reducing its toxicity. The polypeptide is Fluoride-specific ion channel FluC (Campylobacter lari (strain RM2100 / D67 / ATCC BAA-1060)).